The primary structure comprises 161 residues: Extracellular giant hemoglobin major globin subunit B1 (161 aa).

The signal sequence occupies residues methionine 1–alanine 16. The Globin domain occupies cysteine 18–leucine 161. Cysteines 19 and 149 form a disulfide. Residue histidine 112 coordinates heme b.

Belongs to the globin family. In terms of assembly, the 400 kDa hemoglobin consists of a spherical 24-mer arranged as a double layer of dome-shaped dodecamers. Each dodecamer is composed of the 3-fold trimer of the tetramer A1-A2-B1-B2 having one intra-tetramer (A1-B2) disulfide bond and one inter-tetramer (B1-B2) disulfide bond per tetramer.

It localises to the secreted. In terms of biological role, the extracellular giant hemoglobin is able to bind and transport oxygen and sulfide simultaneously and reversibly at two different sites. The protein is Extracellular giant hemoglobin major globin subunit B1 (ghbB1) of Oligobrachia mashikoi (Beard worm).